Here is an 865-residue protein sequence, read N- to C-terminus: Chitin synthase 3 (865 aa).

The tract at residues 1–59 (MASQYPGHQLDDIPSTNVYRPPPRHEDDEAEHALLHQNSAYQSQYDDPHSRPLTPGQES) is disordered. Residues 23–34 (PRHEDDEAEHAL) show a composition bias toward basic and acidic residues. The span at 36–45 (HQNSAYQSQY) shows a compositional bias: polar residues. N-linked (GlcNAc...) asparagine glycans are attached at residues asparagine 64, asparagine 95, and asparagine 538. 3 helical membrane-spanning segments follow: residues 565-585 (FFLH…WFSL), 620-640 (IINT…FILA), and 650-670 (VAYI…IVLS). Asparagine 682 carries N-linked (GlcNAc...) asparagine glycosylation. Transmembrane regions (helical) follow at residues 707-727 (IVII…FLYM), 735-755 (SFAQ…IYAF), and 837-857 (LVAT…SDSL).

It belongs to the chitin synthase family. Class III subfamily.

The protein localises to the cell membrane. The catalysed reaction is [(1-&gt;4)-N-acetyl-beta-D-glucosaminyl](n) + UDP-N-acetyl-alpha-D-glucosamine = [(1-&gt;4)-N-acetyl-beta-D-glucosaminyl](n+1) + UDP + H(+). Functionally, polymerizes chitin, a structural polymer of the cell wall and septum, by transferring the sugar moiety of UDP-GlcNAc to the non-reducing end of the growing chitin polymer. Is not only stable at different pH, but is also able to tolerate a broad temperature range. With CHS2, plays an important role in virulence. This Exophiala dermatitidis (strain ATCC 34100 / CBS 525.76 / NIH/UT8656) (Black yeast) protein is Chitin synthase 3.